Consider the following 156-residue polypeptide: MTSVIYPGTFDPITNGHLDIIERSAVIFPRVLVAVANSPSKKTLFSLEERVELVRQSVAHLSNVEVFGFSDLLANVIKQHNISAIIRGVRTTIDFEYELQLAALNRLLTKGVESLFFPPAEKWVFVSSTIVREIYLHGGDVAELVPVPVFNALKAR.

Thr-9 contributes to the substrate binding site. Residues 9–10 (TF) and His-17 each bind ATP. Residues Lys-41, Leu-73, and Arg-87 each contribute to the substrate site. ATP is bound by residues 88 to 90 (GVR), Glu-98, and 123 to 129 (WVFVSST).

The protein belongs to the bacterial CoaD family. In terms of assembly, homohexamer. Mg(2+) serves as cofactor.

It is found in the cytoplasm. It carries out the reaction (R)-4'-phosphopantetheine + ATP + H(+) = 3'-dephospho-CoA + diphosphate. It functions in the pathway cofactor biosynthesis; coenzyme A biosynthesis; CoA from (R)-pantothenate: step 4/5. Its function is as follows. Reversibly transfers an adenylyl group from ATP to 4'-phosphopantetheine, yielding dephospho-CoA (dPCoA) and pyrophosphate. The sequence is that of Phosphopantetheine adenylyltransferase from Haemophilus influenzae (strain PittEE).